Reading from the N-terminus, the 605-residue chain is Protein kinase wis1 (605 aa).

The segment covering M1 to P20 has biased composition (polar residues). A disordered region spans residues M1 to L141. 2 stretches are compositionally biased toward low complexity: residues G31 to S73 and R90 to L105. Basic and acidic residues predominate over residues D106–R115. S168 carries the post-translational modification Phosphoserine. Polar residues predominate over residues S188 to K200. A disordered region spans residues S188–L263. Residues S244 to S256 are compositionally biased toward low complexity. Position 253 is a phosphoserine (S253). A Protein kinase domain is found at I320–L579. ATP-binding positions include L326 to V334 and K349. The active-site Proton acceptor is the D441. S469 is modified (phosphoserine). T473 carries the post-translational modification Phosphothreonine.

This sequence belongs to the protein kinase superfamily. STE Ser/Thr protein kinase family. MAP kinase kinase subfamily. In terms of processing, dephosphorylated by pyp1 and pyp2.

The catalysed reaction is L-seryl-[protein] + ATP = O-phospho-L-seryl-[protein] + ADP + H(+). The enzyme catalyses L-threonyl-[protein] + ATP = O-phospho-L-threonyl-[protein] + ADP + H(+). It carries out the reaction L-tyrosyl-[protein] + ATP = O-phospho-L-tyrosyl-[protein] + ADP + H(+). Dosage-dependent regulator of mitosis with serine/ threonine protein kinase activity. May play a role in the integration of nutritional sensing with the control over entry into mitosis. It may interact with cdc25, wee1 and win1. May activate sty1. The sequence is that of Protein kinase wis1 (wis1) from Schizosaccharomyces pombe (strain 972 / ATCC 24843) (Fission yeast).